A 1843-amino-acid chain; its full sequence is Xin actin-binding repeat-containing protein 1 (1843 aa).

Over residues 1–10 (MADTQTQVAP) the composition is skewed to polar residues. The tract at residues 1-48 (MADTQTQVAPTPTMRMATAEDLPLPPPPALEDLPLPPPKESFSKFHQQ) is disordered. The segment at 1–54 (MADTQTQVAPTPTMRMATAEDLPLPPPPALEDLPLPPPKESFSKFHQQRQASEL) is interaction with VASP. The segment covering 23–39 (PLPPPPALEDLPLPPPK) has biased composition (pro residues). 4 Xin repeats span residues 89-104 (GDVQCMRWIFENWRLD), 121-136 (GDVQATSRKFEEGSFA), 151-166 (GDVRAARWLFETKPLD), and 186-201 (GDVQGTRMLFETRPLD). Positions 132–151 (EGSFANSTDQEPTRPQPGGG) are disordered. Residues Ser205, Ser208, and Ser213 each carry the phosphoserine modification. 2 Xin repeats span residues 226-241 (GDVKKTVKLFQTEPLC) and 264-279 (NAVRSARWLFETRPLD). Residue Ser295 is modified to Phosphoserine. A Xin 7 repeat occupies 302-317 (PDVSATRWIFETQPLD). Ser332 carries the phosphoserine modification. Xin repeat units follow at residues 340 to 355 (PDVQQQQHLFETRALD) and 376 to 391 (GDVRSTLWLFETKPLD). The tract at residues 406 to 432 (DPQDGEGHLSSDSSSALPFSQSAPQRD) is disordered. Residues 415 to 429 (SSDSSSALPFSQSAP) are compositionally biased toward low complexity. The Xin 10 repeat unit spans residues 436–451 (GDVKTFKNLFETLPLD). Residues 455–479 (QGEVLAHGSPSREEGTDSAGQAQGI) are disordered. Xin repeat units follow at residues 507-522 (GDVQGYRWMFETQPLD) and 545-560 (GDVGTARWLFETQPLE). An interaction with CTNNB1 region spans residues 531-632 (IDVVRGITRQ…AQSCTWMFKP (102 aa)). Residues 564–577 (QREQQERQKEEGKS) show a composition bias toward basic and acidic residues. A disordered region spans residues 564–591 (QREQQERQKEEGKSQGDPQPEAPPKGDV). Xin repeat units follow at residues 589–604 (GDVQTIRWLFETCPMS), 621–636 (AEAQSCTWMFKPQPVD), 654–669 (GERQTDRHVFETEPLQ), 691–706 (GQVSRQKEVFQALEAG), and 723–738 (GSVHKFTWLFENCPMG). 5 disordered regions span residues 943–999 (SLRW…QAIG), 1063–1205 (AEAQ…MAWG), 1238–1277 (SGPQAAGASPHPHNAFVPPPPTLPAAVTGPDFPAGAHRAE), 1289–1471 (DPLL…QKEL), and 1561–1696 (MSSL…DVSV). 2 stretches are compositionally biased toward polar residues: residues 1064–1073 (EAQSLHQQVL) and 1080–1089 (PTPTATSNPI). Residues 1294–1311 (SHSSPAGQRTPGGSQTKT) show a composition bias toward polar residues. The span at 1357–1368 (GQREHQRGERDT) shows a compositional bias: basic and acidic residues. A compositionally biased stretch (polar residues) spans 1393-1424 (GHSQPSLQHGLSTTAPRPTKNQATGSNAQSSE). Positions 1462-1490 (DSLQRNQKELQGLLNQVQALEKEAASSVD) form a coiled coil. Composition is skewed to polar residues over residues 1588–1600 (VTVSSSARPSGSG) and 1663–1679 (SRDSPSSPTFISIQSAT). Residues 1685-1843 (TPSFKGNPDV…SCSYSQPAAQ (159 aa)) form an interaction with FLNC region.

Belongs to the Xin family. In terms of assembly, interacts (via N-terminus) with CTTN; the interaction promotes CTTN localization to intercalated disks in cardiomyocytes. Interacts with CTNNB1. Interacts with FLNC and VASP. Interacts with F-actin. In terms of tissue distribution, expressed in skeletal muscle at areas of Z-disk disruption in a longitudinal pattern spanning one or more sarcomeres (at protein level). As to expression, expressed in the heart (at protein level). Expressed in the heart.

It localises to the cell junction. It is found in the adherens junction. The protein resides in the desmosome. In terms of biological role, protects actin filaments from depolymerization. Required for correct cardiac intercalated disk ultrastructure via maintenance of cell-cell adhesion stability, and as a result maintains cardiac organ morphology, conductance and heart beat rhythm. Required for development of normal skeletal muscle morphology and muscle fiber type composition. Plays a role in regulating muscle satellite cell activation and survival, as a result promotes muscle fiber recovery from injury and fatigue. This is Xin actin-binding repeat-containing protein 1 from Homo sapiens (Human).